A 485-amino-acid polypeptide reads, in one-letter code: Glutamyl-tRNA(Gln) amidotransferase subunit A (485 aa).

Catalysis depends on charge relay system residues Lys-74 and Ser-149. Catalysis depends on Ser-173, which acts as the Acyl-ester intermediate.

It belongs to the amidase family. GatA subfamily. In terms of assembly, heterotrimer of A, B and C subunits.

The enzyme catalyses L-glutamyl-tRNA(Gln) + L-glutamine + ATP + H2O = L-glutaminyl-tRNA(Gln) + L-glutamate + ADP + phosphate + H(+). In terms of biological role, allows the formation of correctly charged Gln-tRNA(Gln) through the transamidation of misacylated Glu-tRNA(Gln) in organisms which lack glutaminyl-tRNA synthetase. The reaction takes place in the presence of glutamine and ATP through an activated gamma-phospho-Glu-tRNA(Gln). The polypeptide is Glutamyl-tRNA(Gln) amidotransferase subunit A (Synechococcus sp. (strain RCC307)).